Reading from the N-terminus, the 217-residue chain is Putative peroxiredoxin Q, chloroplastic (217 aa).

The N-terminal 66 residues, 1–66, are a transit peptide targeting the chloroplast; it reads MAFAVSTACR…PSTTGRNRIV (66 aa). In terms of domain architecture, Thioredoxin spans 70–217; sequence VSKGSAAPNF…GETLKILQSL (148 aa). The Cysteine sulfenic acid (-SOH) intermediate role is filled by Cys-112. An intrachain disulfide couples Cys-112 to Cys-117.

This sequence belongs to the peroxiredoxin family. BCP/PrxQ subfamily. As to quaternary structure, monomer.

The protein localises to the plastid. Its subcellular location is the chloroplast thylakoid lumen. It catalyses the reaction a hydroperoxide + [thioredoxin]-dithiol = an alcohol + [thioredoxin]-disulfide + H2O. Thiol-specific peroxidase that catalyzes the reduction of hydrogen peroxide and organic hydroperoxides to water and alcohols, respectively. Plays a role in cell protection against oxidative stress by detoxifying peroxides. This chain is Putative peroxiredoxin Q, chloroplastic, found in Oryza sativa subsp. indica (Rice).